Here is a 467-residue protein sequence, read N- to C-terminus: Cysteine--tRNA ligase (467 aa).

C30 provides a ligand contact to Zn(2+). Residues 32–42 (PTVYNYIHIGN) carry the 'HIGH' region motif. Zn(2+)-binding residues include C210, H235, and E239. A 'KMSKS' region motif is present at residues 267–271 (KMSKS). K270 contacts ATP. S271 is modified (phosphoserine).

Belongs to the class-I aminoacyl-tRNA synthetase family. In terms of assembly, monomer. Zn(2+) serves as cofactor.

It localises to the cytoplasm. It carries out the reaction tRNA(Cys) + L-cysteine + ATP = L-cysteinyl-tRNA(Cys) + AMP + diphosphate. This Geobacillus thermodenitrificans (strain NG80-2) protein is Cysteine--tRNA ligase.